Consider the following 1428-residue polypeptide: MSTEPVSASDKYQKISQLEHILKRPDTYIGSVETQEQLQWIYDEETDCMIEKNVTIVPGLFKIFDEILVNAADNKVRDPSMKRIDVNIHAEEHTIEVKNDGKGIPIEIHNKENIYIPEMIFGHLLTSSNYDDDEKKVTGGRNGYGAKLCNIFSTEFILETADLNVGQKYVQKWENNMSICHPPKITSYKKGPSYTKVTFKPDLTRFGMKELDNDILGVMRRRVYDINGSVRDINVYLNGKSLKIRNFKNYVELYLKSLEKKRQLDNGEDGAAKSDIPTILYERINNRWEVAFAVSDISFQQISFVNSIATTMGGTHVNYITDQIVKKISEILKKKKKKSVKSFQIKNNMFIFINCLIENPAFTSQTKEQLTTRVKDFGSRCEIPLEYINKIMKTDLATRMFEIADANEENALKKSDGTRKSRITNYPKLEDANKAGTKEGYKCTLVLTEGDSALSLAVAGLAVVGRDYYGCYPLRGKMLNVREASADQILKNAEIQAIKKIMGLQHRKKYEDTKSLRYGHLMIMTDQDHDGSHIKGLIINFLESSFPGLLDIQGFLLEFITPIIKVSITKPTKNTIAFYNMPDYEKWREEESHKFTWKQKYYKGLGTSLAQEVREYFSNLDRHLKIFHSLQGNDKDYIDLAFSKKKADDRKEWLRQYEPGTVLDPTLKEIPISDFINKELILFSLADNIRSIPNVLDGFKPGQRKVLYGCFKKNLKSELKVAQLAPYVSECTAYHHGEQSLAQTIIGLAQNFVGSNNIYLLLPNGAFGTRATGGKDAAAARYIYTELNKLTRKIFHPADDPLYKYIQEDEKTVEPEWYLPILPMILVNGAEGIGTGWSTYIPPFNPLEIIKNIRHLMNDEELEQMHPWFRGWTGTIEEIEPLRYRMYGRIEQIGDNVLEITELPARTWTSTIKEYLLLGLSGNDKIKPWIKDMEEQHDDNIKFIITLSPEEMAKTRKIGFYERFKLISPISLMNMVAFDPHGKIKKYNSVNEILSEFYYVRLEYYQKRKDHMSERLQWEVEKYSFQVKFIKMIIEKELTVTNKPRNAIIQELENLGFPRFNKEGKPYYGSPNDEIAEQINDVKGATSDEEDEESSHEDTENVINGPEELYGTYEYLLGMRIWSLTKERYQKLLKQKQEKETELENLLKLSAKDIWNTDLKAFEVGYQEFLQRDAEARGGNVPNKGSKTKGKGKRKLVDDEDYDPSKKNKKSTARKGKKIKLEDKNFERILLEQKLVTKSKAPTKIKKEKTPSVSETKTEEEENAPSSTSSSSIFDIKKEDKDEGELSKISNKFKKISTIFDKMGSTSATSKENTPEQDDVATKKNQTTAKKTAVKPKLAKKPVRKQQKVVELSGESDLEILDSYTDREDSNKDEDDAIPQRSRRQRSSRAASVPKKSYVETLELSDDSFIEDDEEENQGSDVSFNEED.

ATP-binding positions include Asn70, Asn99, 127-129 (SSN), and 140-147 (GRNGYGAK). The interaction with DNA stretch occupies residues 333–336 (KKKK). ATP is bound at residue 365–367 (QTK). One can recognise a Toprim domain in the interval 443-557 (CTLVLTEGDS…GLLDIQGFLL (115 aa)). Glu449, Asp526, and Asp528 together coordinate Mg(2+). One can recognise a Topo IIA-type catalytic domain in the interval 692-1159 (IPNVLDGFKP…SAKDIWNTDL (468 aa)). The active-site O-(5'-phospho-DNA)-tyrosine intermediate is the Tyr782. Residues 965–974 (KLISPISLMN) are interaction with DNA. 4 disordered regions span residues 1083–1102 (KGATSDEEDEESSHEDTENV), 1176–1217 (ARGG…RKGK), 1240–1288 (KAPT…ELSK), and 1303–1428 (MGST…NEED). At Thr1086 the chain carries Phosphothreonine; by CK2. Ser1087 bears the Phosphoserine; by CK2 mark. A compositionally biased stretch (basic residues) spans 1207-1217 (KNKKSTARKGK). Position 1252 is a phosphoserine (Ser1252). Phosphothreonine; by CK2 is present on Thr1258. Ser1266, Ser1269, and Ser1272 each carry phosphoserine; by CK2. Residues 1275-1286 (DIKKEDKDEGEL) are compositionally biased toward basic and acidic residues. Over residues 1332-1347 (TAVKPKLAKKPVRKQQ) the composition is skewed to basic residues. Phosphoserine; by CK2 is present on residues Ser1353, Ser1356, Ser1408, and Ser1423. The segment covering 1403–1428 (ELSDDSFIEDDEEENQGSDVSFNEED) has biased composition (acidic residues).

This sequence belongs to the type II topoisomerase family. In terms of assembly, homodimer. Requires Mg(2+) as cofactor. Mn(2+) serves as cofactor. It depends on Ca(2+) as a cofactor. Post-translationally, phosphorylation enhances the activity. Stimulates decatenation activity.

It localises to the nucleus. The enzyme catalyses ATP-dependent breakage, passage and rejoining of double-stranded DNA.. In terms of biological role, control of topological states of DNA by transient breakage and subsequent rejoining of DNA strands. Topoisomerase II makes double-strand breaks. Essential during mitosis and meiosis for proper segregation of daughter chromosomes. The sequence is that of DNA topoisomerase 2 (TOP2) from Saccharomyces cerevisiae (strain ATCC 204508 / S288c) (Baker's yeast).